Reading from the N-terminus, the 357-residue chain is Mitochondrial carrier protein LEU5 (357 aa).

A run of 6 helical transmembrane segments spans residues 31–47, 103–119, 136–153, 208–228, 269–285, and 325–347; these read DYIV…GSCA, LRIF…YEQI, LVSG…TYPL, VPTV…HDLL, ISGG…AYPF, and GFFV…SFFV. Solcar repeat units lie at residues 31–122, 130–231, and 262–354; these read DYIV…IRNT, ESHW…LHDV, and LRTW…MKWN.

This sequence belongs to the mitochondrial carrier (TC 2.A.29) family.

The protein localises to the mitochondrion inner membrane. In terms of biological role, required for the accumulation of coenzyme A in the mitochondrial matrix. This Saccharomyces cerevisiae (strain ATCC 204508 / S288c) (Baker's yeast) protein is Mitochondrial carrier protein LEU5 (LEU5).